The following is a 338-amino-acid chain: tRNA pseudouridine synthase D (338 aa).

The active-site Nucleophile is the Asp-79. One can recognise a TRUD domain in the interval 154–303; the sequence is GVPNYFGEQR…EEAWRANILY (150 aa).

Belongs to the pseudouridine synthase TruD family.

It carries out the reaction uridine(13) in tRNA = pseudouridine(13) in tRNA. Functionally, responsible for synthesis of pseudouridine from uracil-13 in transfer RNAs. This chain is tRNA pseudouridine synthase D, found in Legionella pneumophila (strain Corby).